The chain runs to 798 residues: Protocadherin beta-14 (798 aa).

A signal peptide spans Met-1 to Ala-26. Residues Gly-27–Leu-686 are Extracellular-facing. 5 consecutive Cadherin domains span residues Val-35–Phe-133, Ile-138–Phe-242, Tyr-247–Val-347, Ile-352–Phe-451, and Tyr-456–Val-561. Cys-96 and Cys-102 form a disulfide bridge. An N-linked (GlcNAc...) asparagine glycan is attached at Asn-169. Residues Asn-359, Asn-418, and Asn-436 are each glycosylated (N-linked (GlcNAc...) asparagine). N-linked (GlcNAc...) asparagine glycosylation is present at Asn-567. In terms of domain architecture, Cadherin 6 spans Gly-568–Leu-671. Residues Thr-687–Val-711 form a helical membrane-spanning segment. The Cytoplasmic portion of the chain corresponds to Arg-712–Gln-798.

Its subcellular location is the cell membrane. Functionally, potential calcium-dependent cell-adhesion protein. May be involved in the establishment and maintenance of specific neuronal connections in the brain. The chain is Protocadherin beta-14 (PCDHB14) from Pan troglodytes (Chimpanzee).